Consider the following 1218-residue polypeptide: Protein STICHEL (1218 aa).

The interval 24–136 (AGRVLRDPGT…SDARNGGDSY (113 aa)) is disordered. Polar residues-rich tracts occupy residues 32-46 (GTTS…SSRS), 54-73 (ASRN…SSTN), and 86-95 (WKTQKSSSEK). The Bipartite nuclear localization signal signature appears at 163–180 (RKSNVGSCKKKSKKKISS). 2 consecutive short sequence motifs (PEST) follow at residues 273 to 304 (RNPS…LPGR) and 425 to 449 (RSQD…ETIR). ATP is bound at residue 490-497 (GPRGTGKT). Residues Cys-509, Cys-518, Cys-521, and Cys-524 each coordinate Zn(2+). A coiled-coil region spans residues 762–788 (EADMEGLKHALKLLSEAEKQLRVSNDR). The tract at residues 802–828 (MPSPGTTHTGSSRRQSSRATDDDPASV) is disordered. The segment covering 804–819 (SPGTTHTGSSRRQSSR) has biased composition (polar residues). 2 consecutive short sequence motifs (bipartite nuclear localization signal) follow at residues 1178 to 1195 (RRSK…SRRN) and 1196 to 1213 (RKSR…RKAE).

Belongs to the DnaX/STICHEL family. Interacts with BLT. As to expression, ubiquitous.

The protein localises to the nucleus. Its function is as follows. Acts as a key regulator of trichome branching through an endoreduplication-independent pathway. This Arabidopsis thaliana (Mouse-ear cress) protein is Protein STICHEL (STI).